The chain runs to 355 residues: MFAKLDHLEAKYEELNRLISDPVVIQDQERWRGYVKSHAEIGEVVAVYREYKRVAAEMDDARQMLREEQDAELRELAESEVEVLRERSDELRRRLRVLLLPKDPNDEKNVIIEIRAGTGGEEAALFAGDLLRMYLRYAERRGWRAEMLNVNETDLGGIKEAIVLLEGRGAYSELKFESGVHRVQRVPATESGGRIHTSAATVAVLPEAEEVDVEIRPEDLRIDVFCSTGPGGQSVNTTQSAVRVTHLPSGIVVSCQDEKSQHKNRDKAMKVLRARLLDKAQQEQQERIASSRKTQVGTGDRSERIRTYNFPQNRVTDHRLNLTLYRLEEVLQGDLHEFVSALITSDQAEKLKTLD.

Gln-233 carries the N5-methylglutamine modification.

It belongs to the prokaryotic/mitochondrial release factor family. Methylated by PrmC. Methylation increases the termination efficiency of RF1.

Its subcellular location is the cytoplasm. In terms of biological role, peptide chain release factor 1 directs the termination of translation in response to the peptide chain termination codons UAG and UAA. This chain is Peptide chain release factor 1, found in Desulforudis audaxviator (strain MP104C).